We begin with the raw amino-acid sequence, 60 residues long: Large ribosomal subunit protein bL33 (60 aa).

Belongs to the bacterial ribosomal protein bL33 family.

The sequence is that of Large ribosomal subunit protein bL33 from Chlorobium limicola (strain DSM 245 / NBRC 103803 / 6330).